Reading from the N-terminus, the 396-residue chain is Acetate kinase (396 aa).

Residue N8 coordinates Mg(2+). K15 contributes to the ATP binding site. Substrate is bound at residue R90. D147 functions as the Proton donor/acceptor in the catalytic mechanism. ATP is bound by residues 207–211, 283–285, and 330–334; these read HLGSG, DMR, and GIGEN. E384 contributes to the Mg(2+) binding site.

The protein belongs to the acetokinase family. Homodimer. It depends on Mg(2+) as a cofactor. The cofactor is Mn(2+).

It is found in the cytoplasm. It catalyses the reaction acetate + ATP = acetyl phosphate + ADP. It participates in metabolic intermediate biosynthesis; acetyl-CoA biosynthesis; acetyl-CoA from acetate: step 1/2. Catalyzes the formation of acetyl phosphate from acetate and ATP. Can also catalyze the reverse reaction. This is Acetate kinase from Lacticaseibacillus paracasei (strain ATCC 334 / BCRC 17002 / CCUG 31169 / CIP 107868 / KCTC 3260 / NRRL B-441) (Lactobacillus paracasei).